A 213-amino-acid chain; its full sequence is MAITQFRLFKVCTCLATVLSFLKRLICRSGRGRKLSGDQITLPTTVDYSSVPKQTDVEEWTSWDEDAPTSVKIEGGTGNAAAQQNSLEQLEPDYFKDMTPTIRKTQKIVIKKREPLSFGVPDGSTGFSSRLAATQDMPFIHQSSELGDLDTWQENSNAWEEEEDAAWQAEEVLRQQKIADREKRAAEQQRKKMEKEAQRLLKKEQNKMGVKLS.

At 1–6 the chain is on the extracellular side; the sequence is MAITQF. Residues 7-27 form a helical; Signal-anchor for type III membrane protein membrane-spanning segment; sequence RLFKVCTCLATVLSFLKRLIC. The Cytoplasmic portion of the chain corresponds to 28–213; it reads RSGRGRKLSG…EQNKMGVKLS (186 aa). Phosphoserine is present on Ser-36. Thr-41 bears the Phosphothreonine mark. Tyr-94 is subject to Phosphotyrosine. A coiled-coil region spans residues 168–209; that stretch reads QAEEVLRQQKIADREKRAAEQQRKKMEKEAQRLLKKEQNKMG. Positions 179–206 are enriched in basic and acidic residues; it reads ADREKRAAEQQRKKMEKEAQRLLKKEQN. Residues 179–213 form a disordered region; that stretch reads ADREKRAAEQQRKKMEKEAQRLLKKEQNKMGVKLS.

As to quaternary structure, homodimer.

Its subcellular location is the golgi apparatus membrane. Its function is as follows. May participate in suppression of cell proliferation and induces apoptotic cell death through activation of interleukin-1-beta converting enzyme (ICE)-like proteases. The polypeptide is Receptor-binding cancer antigen expressed on SiSo cells (Ebag9) (Rattus norvegicus (Rat)).